The primary structure comprises 792 residues: Alpha-1,6-mannosylglycoprotein 6-beta-N-acetylglucosaminyltransferase B (792 aa).

Residues 1–24 are Cytoplasmic-facing; sequence MITVNPDGKIMVRRCLVTLRPFRL. A helical; Signal-anchor for type II membrane protein transmembrane segment spans residues 25–45; it reads FVLGIGFFTLCFLMTSLGGQF. Residues 46–792 lie on the Lumenal side of the membrane; it reads SARRLGDSPF…GQVALCQGCL (747 aa). Asparagine 127 is a glycosylation site (N-linked (GlcNAc...) asparagine). 4 disulfide bridges follow: cysteine 157-cysteine 195, cysteine 168-cysteine 208, cysteine 184-cysteine 353, and cysteine 387-cysteine 644. N-linked (GlcNAc...) asparagine glycosylation occurs at asparagine 675. 5 disulfides stabilise this stretch: cysteine 700–cysteine 775, cysteine 704–cysteine 777, cysteine 711–cysteine 764, cysteine 732–cysteine 753, and cysteine 788–cysteine 791.

It belongs to the glycosyltransferase 18 family. Requires Mn(2+) as cofactor. As to expression, present in brain (at protein level). Predominantly expressed in hippocampus, superficial layers of the brain cortex, striatum, nucleus accumbens, a subset of nuclei in the thalamus, inferior colliculus, brain stem and cerebellum.

The protein resides in the golgi apparatus membrane. The enzyme catalyses N(4)-{beta-D-GlcNAc-(1-&gt;2)-[beta-D-GlcNAc-(1-&gt;4)]-alpha-D-Man-(1-&gt;3)-[beta-D-GlcNAc-(1-&gt;2)-alpha-D-Man-(1-&gt;6)]-beta-D-Man-(1-&gt;4)-beta-D-GlcNAc-(1-&gt;4)-beta-D-GlcNAc}-L-asparaginyl-[protein] + UDP-N-acetyl-alpha-D-glucosamine = N(4)-{beta-D-GlcNAc-(1-&gt;2)-[beta-D-GlcNAc-(1-&gt;4)]-alpha-D-Man-(1-&gt;3)-[beta-D-GlcNAc-(1-&gt;2)-[beta-D-GlcNAc-(1-&gt;6)]-alpha-D-Man-(1-&gt;6)]-beta-D-Man-(1-&gt;4)-beta-D-GlcNAc-(1-&gt;4)-beta-D-GlcNAc}-L-asparaginyl-[protein] + UDP + H(+). The catalysed reaction is 3-O-[N-acetyl-beta-D-glucosaminyl-(1-&gt;2)-alpha-D-mannosyl]-L-seryl-[protein] + UDP-N-acetyl-alpha-D-glucosamine = O(3)-{N-acetyl-beta-D-glucosaminyl-(1-&gt;2)-[N-acetyl-beta-D-glucosaminyl-(1-&gt;6)]-alpha-D-mannosyl}-L-seryl-[protein] + UDP + H(+). It catalyses the reaction 3-O-[N-acetyl-beta-D-glucosaminyl-(1-&gt;2)-alpha-D-mannosyl]-L-threonyl-[protein] + UDP-N-acetyl-alpha-D-glucosamine = O(3)-{N-acetyl-beta-D-glucosaminyl-(1-&gt;2)-[N-acetyl-beta-D-glucosaminyl-(1-&gt;6)]-alpha-D-mannosyl}-L-threonyl-[protein] + UDP + H(+). It functions in the pathway protein modification; protein glycosylation. Functionally, glycosyltransferase that acts on alpha-linked mannose of N-glycans and O-mannosyl glycans. Catalyzes the transfer of N-acetylglucosamine (GlcNAc) to the beta 1-6 linkage of the mannose residue of GlcNAc-beta1,2-Man-alpha on both the alpha1,3- and alpha1,6-linked mannose arms in the core structure of N-glycan. Also acts on the GlcNAc-beta1,2-Man-alpha1-Ser/Thr moiety, forming a 2,6-branched structure in brain O-mannosyl glycan. Plays an active role in modulating integrin and laminin-dependent adhesion and migration of neuronal cells via its activity in the O-mannosyl glycan pathway. This is Alpha-1,6-mannosylglycoprotein 6-beta-N-acetylglucosaminyltransferase B (Mgat5b) from Mus musculus (Mouse).